We begin with the raw amino-acid sequence, 412 residues long: NADH-quinone oxidoreductase subunit D (412 aa).

This sequence belongs to the complex I 49 kDa subunit family. In terms of assembly, NDH-1 is composed of 14 different subunits. Subunits NuoB, C, D, E, F, and G constitute the peripheral sector of the complex.

Its subcellular location is the cell inner membrane. It catalyses the reaction a quinone + NADH + 5 H(+)(in) = a quinol + NAD(+) + 4 H(+)(out). Its function is as follows. NDH-1 shuttles electrons from NADH, via FMN and iron-sulfur (Fe-S) centers, to quinones in the respiratory chain. The immediate electron acceptor for the enzyme in this species is believed to be a menaquinone. Couples the redox reaction to proton translocation (for every two electrons transferred, four hydrogen ions are translocated across the cytoplasmic membrane), and thus conserves the redox energy in a proton gradient. In Flavobacterium psychrophilum (strain ATCC 49511 / DSM 21280 / CIP 103535 / JIP02/86), this protein is NADH-quinone oxidoreductase subunit D.